Consider the following 280-residue polypeptide: Formamidopyrimidine-DNA glycosylase (280 aa).

Pro2 functions as the Schiff-base intermediate with DNA in the catalytic mechanism. The active-site Proton donor is the Glu3. The Proton donor; for beta-elimination activity role is filled by Lys59. The DNA site is built by His92 and Arg111. The FPG-type zinc finger occupies 239–273; the sequence is NVYGQTGLPCNRCGTPIVKTKVAQRGTHYCPQCQQ. Arg263 serves as the catalytic Proton donor; for delta-elimination activity.

The protein belongs to the FPG family. As to quaternary structure, monomer. It depends on Zn(2+) as a cofactor.

The catalysed reaction is Hydrolysis of DNA containing ring-opened 7-methylguanine residues, releasing 2,6-diamino-4-hydroxy-5-(N-methyl)formamidopyrimidine.. The enzyme catalyses 2'-deoxyribonucleotide-(2'-deoxyribose 5'-phosphate)-2'-deoxyribonucleotide-DNA = a 3'-end 2'-deoxyribonucleotide-(2,3-dehydro-2,3-deoxyribose 5'-phosphate)-DNA + a 5'-end 5'-phospho-2'-deoxyribonucleoside-DNA + H(+). Functionally, involved in base excision repair of DNA damaged by oxidation or by mutagenic agents. Acts as a DNA glycosylase that recognizes and removes damaged bases. Has a preference for oxidized purines, such as 7,8-dihydro-8-oxoguanine (8-oxoG). Has AP (apurinic/apyrimidinic) lyase activity and introduces nicks in the DNA strand. Cleaves the DNA backbone by beta-delta elimination to generate a single-strand break at the site of the removed base with both 3'- and 5'-phosphates. This chain is Formamidopyrimidine-DNA glycosylase, found in Enterococcus faecalis (strain ATCC 700802 / V583).